The primary structure comprises 458 residues: ATP synthase subunit beta (458 aa).

148 to 155 contacts ATP; it reads GGAGVGKT.

Belongs to the ATPase alpha/beta chains family. F-type ATPases have 2 components, CF(1) - the catalytic core - and CF(0) - the membrane proton channel. CF(1) has five subunits: alpha(3), beta(3), gamma(1), delta(1), epsilon(1). CF(0) has three main subunits: a(1), b(2) and c(9-12). The alpha and beta chains form an alternating ring which encloses part of the gamma chain. CF(1) is attached to CF(0) by a central stalk formed by the gamma and epsilon chains, while a peripheral stalk is formed by the delta and b chains.

The protein resides in the cell inner membrane. The enzyme catalyses ATP + H2O + 4 H(+)(in) = ADP + phosphate + 5 H(+)(out). In terms of biological role, produces ATP from ADP in the presence of a proton gradient across the membrane. The catalytic sites are hosted primarily by the beta subunits. The sequence is that of ATP synthase subunit beta from Pseudomonas aeruginosa (strain LESB58).